The following is a 69-amino-acid chain: MTMRVSADRTVCVGAGLCALTAPGVFDQDDDGIVTVLTAEPAADDDRRTAREAGHLCPSGAVRVVEDTE.

[3Fe-4S] cluster-binding residues include cysteine 12, cysteine 18, and cysteine 57.

[3Fe-4S] cluster is required as a cofactor.

Its function is as follows. Electron transport protein for the cytochrome P-450-SU1 system. This chain is Ferredoxin-1 (suaB), found in Streptomyces griseolus.